The following is a 401-amino-acid chain: Large ribosomal subunit protein uL4 (401 aa).

Belongs to the universal ribosomal protein uL4 family.

The protein is Large ribosomal subunit protein uL4 (RpL4) of Drosophila melanogaster (Fruit fly).